Reading from the N-terminus, the 128-residue chain is Transcription antitermination protein NusB (128 aa).

The protein belongs to the NusB family.

Involved in transcription antitermination. Required for transcription of ribosomal RNA (rRNA) genes. Binds specifically to the boxA antiterminator sequence of the ribosomal RNA (rrn) operons. This Staphylococcus haemolyticus (strain JCSC1435) protein is Transcription antitermination protein NusB.